Reading from the N-terminus, the 348-residue chain is Phosphoribosylformylglycinamidine cyclo-ligase (348 aa).

This sequence belongs to the AIR synthase family.

The protein resides in the cytoplasm. The enzyme catalyses 2-formamido-N(1)-(5-O-phospho-beta-D-ribosyl)acetamidine + ATP = 5-amino-1-(5-phospho-beta-D-ribosyl)imidazole + ADP + phosphate + H(+). It participates in purine metabolism; IMP biosynthesis via de novo pathway; 5-amino-1-(5-phospho-D-ribosyl)imidazole from N(2)-formyl-N(1)-(5-phospho-D-ribosyl)glycinamide: step 2/2. This chain is Phosphoribosylformylglycinamidine cyclo-ligase, found in Ruegeria sp. (strain TM1040) (Silicibacter sp.).